The sequence spans 105 residues: Iron-sulfur cluster assembly protein CyaY (105 aa).

This sequence belongs to the frataxin family.

Functionally, involved in iron-sulfur (Fe-S) cluster assembly. May act as a regulator of Fe-S biogenesis. The protein is Iron-sulfur cluster assembly protein CyaY of Psychromonas ingrahamii (strain DSM 17664 / CCUG 51855 / 37).